Consider the following 85-residue polypeptide: Toxin Cll5c* (85 aa).

Positions 1–17 are cleaved as a signal peptide; it reads MNSLLIITACLVLFVWA. One can recognise an LCN-type CS-alpha/beta domain in the interval 18–83; sequence KEGYLVNKST…TYPLPNKSCS (66 aa). 4 cysteine pairs are disulfide-bonded: C29–C82, C33–C58, C42–C63, and C46–C65. The propeptide at 84–85 is removed by a carboxypeptidase; sequence KK.

It belongs to the long (4 C-C) scorpion toxin superfamily. Sodium channel inhibitor family. Beta subfamily. In terms of tissue distribution, expressed by the venom gland.

It is found in the secreted. In terms of biological role, beta toxins bind voltage-independently at site-4 of sodium channels (Nav) and shift the voltage of activation toward more negative potentials thereby affecting sodium channel activation and promoting spontaneous and repetitive firing. This Centruroides limpidus (Mexican scorpion) protein is Toxin Cll5c*.